Reading from the N-terminus, the 319-residue chain is Lambda-crystallin (319 aa).

Position 2 is an N-acetylalanine (alanine 2). At serine 3 the chain carries Phosphoserine. Residues 16–17, aspartate 36, glutamate 97, and lysine 102 contribute to the NAD(+) site; that span reads LV. Serine 111 is subject to Phosphoserine.

It belongs to the 3-hydroxyacyl-CoA dehydrogenase family. Homodimer. In terms of tissue distribution, detected in eye lens, kidney, liver, heart, lung, brain and testis.

Its subcellular location is the cytoplasm. It catalyses the reaction L-gulonate + NAD(+) = 3-dehydro-L-gulonate + NADH + H(+). Its activity is regulated as follows. Inhibited by malonate and by inorganic phosphate. Functionally, functions as a crystallin in the rabbit eye lens. Has high L-gulonate 3-dehydrogenase activity. It also exhibits low dehydrogenase activity toward L-3-hydroxybutyrate (HBA) and L-threonate. The polypeptide is Lambda-crystallin (CRYL1) (Oryctolagus cuniculus (Rabbit)).